Reading from the N-terminus, the 60-residue chain is Cytotoxin 1 (60 aa).

4 disulfide bridges follow: Cys3–Cys21, Cys14–Cys38, Cys42–Cys53, and Cys54–Cys59.

Belongs to the three-finger toxin family. Short-chain subfamily. Type IA cytotoxin sub-subfamily. Monomer in solution; Homodimer and oligomer in the presence of negatively charged lipids forming a pore with a size ranging between 20 and 30 Angstroms. As to expression, expressed by the venom gland.

Its subcellular location is the secreted. The protein localises to the target cell membrane. Shows cytolytic activity on many different cells by forming pore in lipid membranes. In vivo, increases heart rate or kills the animal by cardiac arrest. In addition, it binds to heparin with high affinity, interacts with Kv channel-interacting protein 1 (KCNIP1) in a calcium-independent manner, and binds to integrin alpha-V/beta-3 (ITGAV/ITGB3) with moderate affinity. This chain is Cytotoxin 1, found in Naja naja (Indian cobra).